The following is an 80-amino-acid chain: Large ribosomal subunit protein uL24 (80 aa).

The tract at residues 53-80 (HMRPTQSNPQGSIIEREFPIHASNVKKS) is disordered.

The protein belongs to the universal ribosomal protein uL24 family. Part of the 50S ribosomal subunit.

In terms of biological role, one of two assembly initiator proteins, it binds directly to the 5'-end of the 23S rRNA, where it nucleates assembly of the 50S subunit. Functionally, one of the proteins that surrounds the polypeptide exit tunnel on the outside of the subunit. In Chlorobium luteolum (strain DSM 273 / BCRC 81028 / 2530) (Pelodictyon luteolum), this protein is Large ribosomal subunit protein uL24.